Consider the following 241-residue polypeptide: Phycocyanobilin:ferredoxin oxidoreductase (241 aa).

It belongs to the HY2 family.

The catalysed reaction is (2R,3Z)-phycocyanobilin + 4 oxidized [2Fe-2S]-[ferredoxin] = biliverdin IXalpha + 4 reduced [2Fe-2S]-[ferredoxin] + 4 H(+). Its function is as follows. Catalyzes the four-electron reduction of biliverdin IX-alpha (2-electron reduction at both the A and D rings); the reaction proceeds via an isolatable 2-electron intermediate, 181,182-dihydrobiliverdin. This Prochlorococcus marinus (strain MIT 9312) protein is Phycocyanobilin:ferredoxin oxidoreductase.